Reading from the N-terminus, the 35-residue chain is Thaumatin-like protein 6 (35 aa).

It belongs to the thaumatin family.

This is Thaumatin-like protein 6 from Glebionis coronaria (Crown daisy).